Here is a 271-residue protein sequence, read N- to C-terminus: Sedoheptulose 1,7-bisphosphatase (271 aa).

Arg-12 contacts substrate. Catalysis depends on His-13, which acts as the Tele-phosphohistidine intermediate. Substrate is bound by residues Tyr-24–Thr-25, Arg-69, Glu-99–Tyr-102, Arg-181, and His-244. Glu-99 (proton donor/acceptor) is an active-site residue.

Belongs to the phosphoglycerate mutase family. SHB17 subfamily. Homodimer.

The protein localises to the cytoplasm. The protein resides in the nucleus. It carries out the reaction D-sedoheptulose 1,7-bisphosphate + H2O = D-sedoheptulose 7-phosphate + phosphate. Sedoheptulose 1,7-bisphosphatase involved in riboneogenesis. Dephosphorylates sedoheptulose 1,7-bisphosphate (SBP), which is converted via the non-oxidative pentose phosphate pathway to ribose-5-phosphate. Has a fructose 1,6-bisphosphatase activity in vitro, but this is probably not biologically relevant, since deletion does not affect fructose 1,6-biphosphate (FBP) levels. The protein is Sedoheptulose 1,7-bisphosphatase (SHB17) of Saccharomyces cerevisiae (strain ATCC 204508 / S288c) (Baker's yeast).